Here is a 614-residue protein sequence, read N- to C-terminus: Autophagy-related protein 22-1 (614 aa).

Positions 1–29 (MQNCTNSPEDQAASVCPPPPQFPGDDTRP) are disordered. Asn-3 carries N-linked (GlcNAc...) asparagine glycosylation. 4 helical membrane-spanning segments follow: residues 41–61 (YGWAAEVFTVCAMGSFLPITL), 126–146 (TASFAMYTFSLSVFIQAILII), 160–180 (MLLVIFALIGSVSTMLFLAVV), and 185–205 (LLGGLFAIISNTCFGASFVLL). A disordered region spans residues 229–254 (PTGTSHDSTSTADGPGQTDGTETTSL). Over residues 230-254 (TGTSHDSTSTADGPGQTDGTETTSL) the composition is skewed to polar residues. 8 consecutive transmembrane segments (helical) span residues 291 to 311 (GIGIGYIGAVILQAICILVVV), 322 to 342 (LVLFLIGLWWFTFTIPAAMWL), 383 to 403 (ILLFLAAWFLLSDGIATVSGT), 417 to 437 (AALGLINVIAMIAGVFGAFSW), 452 to 472 (IVACIILFELVPLYGLLGFIP), 486 to 506 (WEMYPLGVIYGLVMGGLSSYC), 523 to 545 (YALYAITDKGSSVFGPAIVGIIT), and 554 to 574 (AFVFLAVLILLPLPLMLLVDV).

This sequence belongs to the ATG22 family.

Its subcellular location is the vacuole membrane. Vacuolar effluxer which mediate the efflux of amino acids resulting from autophagic degradation. The release of autophagic amino acids allows the maintenance of protein synthesis and viability during nitrogen starvation. The sequence is that of Autophagy-related protein 22-1 (atg22-1) from Aspergillus niger (strain ATCC MYA-4892 / CBS 513.88 / FGSC A1513).